Consider the following 140-residue polypeptide: 3-hydroxyacyl-[acyl-carrier-protein] dehydratase FabZ (140 aa).

The active site involves His-48.

Belongs to the thioester dehydratase family. FabZ subfamily.

The protein resides in the cytoplasm. It carries out the reaction a (3R)-hydroxyacyl-[ACP] = a (2E)-enoyl-[ACP] + H2O. Functionally, involved in unsaturated fatty acids biosynthesis. Catalyzes the dehydration of short chain beta-hydroxyacyl-ACPs and long chain saturated and unsaturated beta-hydroxyacyl-ACPs. This chain is 3-hydroxyacyl-[acyl-carrier-protein] dehydratase FabZ, found in Caldicellulosiruptor saccharolyticus (strain ATCC 43494 / DSM 8903 / Tp8T 6331).